Reading from the N-terminus, the 476-residue chain is BTB/POZ domain-containing protein KCTD8 (476 aa).

The BTB domain occupies 44-122 (EVVELNVGGQ…LRDKQLALPE (79 aa)). S78 carries the phosphoserine modification. R80 is subject to Omega-N-methylarginine. The interval 331–412 (SPKQEHEDRK…WMPPPDKRRN (82 aa)) is disordered. Basic and acidic residues predominate over residues 333 to 349 (KQEHEDRKRDKVTDKGS). Positions 350–391 (ESGTSCNELSTSSCDSHSEASTPQDNPANTQQAAAHQPNTLT) are enriched in polar residues. The residue at position 413 (S413) is a Phosphoserine.

In terms of assembly, interacts as a tetramer with GABBR1 and GABBR2.

Its subcellular location is the presynaptic cell membrane. The protein resides in the postsynaptic cell membrane. Its function is as follows. Auxiliary subunit of GABA-B receptors that determine the pharmacology and kinetics of the receptor response. Increases agonist potency and markedly alter the G-protein signaling of the receptors by accelerating onset and promoting desensitization. The polypeptide is BTB/POZ domain-containing protein KCTD8 (Kctd8) (Mus musculus (Mouse)).